The sequence spans 521 residues: Replicase polyprotein 1ab (521 aa).

The 58-residue stretch at 1-58 (GGGGQSFLAADNAVLVSTQCYKRHSYVEIPSNLLVQNGMSLKDGANLYVYKRVNGAFV) folds into the AV-Nsp11N/CoV-Nsp15M domain. The 142-residue stretch at 75–216 (EPRSDVERDF…EDGSIKTCYP (142 aa)) folds into the NendoU domain. Catalysis depends on residues H104, H119, K159, K263, D347, K391, and E424. The Nidovirus-type SAM-dependent 2'-O-MTase domain maps to 219 to 518 (QSAWTCGYNM…NTSFTSDSFV (300 aa)).

Functionally, the replicase polyprotein of coronaviruses is a multifunctional protein: it contains the activities necessary for the transcription of negative stranded RNA, leader RNA, subgenomic mRNAs and progeny virion RNA as well as proteinases responsible for the cleavage of the polyprotein into functional products. NendoU is a Mn(2+)-dependent, uridylate-specific enzyme, which leaves 2'-3'-cyclic phosphates 5' to the cleaved bond. This is Replicase polyprotein 1ab (rep) from Gallus gallus (Chicken).